The chain runs to 453 residues: CCA-adding enzyme (453 aa).

Ser53 and Lys56 together coordinate ATP. Ser53 and Lys56 together coordinate CTP. Asp65, Asp67, and Asp119 together coordinate Mg(2+). Residues His142, Lys161, and Tyr170 each coordinate ATP. 3 residues coordinate CTP: His142, Lys161, and Tyr170.

This sequence belongs to the tRNA nucleotidyltransferase/poly(A) polymerase family. Archaeal CCA-adding enzyme subfamily. As to quaternary structure, homodimer. The cofactor is Mg(2+).

The catalysed reaction is a tRNA precursor + 2 CTP + ATP = a tRNA with a 3' CCA end + 3 diphosphate. It catalyses the reaction a tRNA with a 3' CCA end + 2 CTP + ATP = a tRNA with a 3' CCACCA end + 3 diphosphate. Functionally, catalyzes the addition and repair of the essential 3'-terminal CCA sequence in tRNAs without using a nucleic acid template. Adds these three nucleotides in the order of C, C, and A to the tRNA nucleotide-73, using CTP and ATP as substrates and producing inorganic pyrophosphate. tRNA 3'-terminal CCA addition is required both for tRNA processing and repair. Also involved in tRNA surveillance by mediating tandem CCA addition to generate a CCACCA at the 3' terminus of unstable tRNAs. While stable tRNAs receive only 3'-terminal CCA, unstable tRNAs are marked with CCACCA and rapidly degraded. The protein is CCA-adding enzyme of Pyrococcus furiosus (strain ATCC 43587 / DSM 3638 / JCM 8422 / Vc1).